Here is a 148-residue protein sequence, read N- to C-terminus: uncharacterized protein (148 aa).

The signal sequence occupies residues 1-23; the sequence is MKALVAVSAVAVVALLGVSSAQA. The segment at 22–45 is disordered; it reads QADPEADPGAGEANYGGPPSSPRL.

This sequence to M.leprae ML2452.

This is an uncharacterized protein from Mycobacterium bovis (strain ATCC BAA-935 / AF2122/97).